The primary structure comprises 316 residues: Serine protease 45 (316 aa).

The N-terminal stretch at 1–38 (MAASLSRLSAGLAASRPLGLSRSFLLLVLLLLNSGYKG) is a signal peptide. In terms of domain architecture, Peptidase S1 spans 49–290 (WWPKNLDLSR…YSRWIKKQIS (242 aa)). Cysteines 74 and 90 form a disulfide. His89 functions as the Charge relay system in the catalytic mechanism. The N-linked (GlcNAc...) asparagine glycan is linked to Asn110. The active-site Charge relay system is the Asp137. N-linked (GlcNAc...) asparagine glycosylation is found at Asn162 and Asn186. 3 cysteine pairs are disulfide-bonded: Cys171/Cys248, Cys206/Cys229, and Cys238/Cys266. The Charge relay system role is filled by Ser242.

Belongs to the peptidase S1 family.

The protein localises to the secreted. The sequence is that of Serine protease 45 (PRSS45) from Bos taurus (Bovine).